Consider the following 246-residue polypeptide: Transcription factor A, mitochondrial (246 aa).

Residues 1 to 42 (MAFLRSMWGVLSALGRSGAAVCIGCGSRLRSPFSFVYLPKCF) constitute a mitochondrion transit peptide. A DNA-binding region (HMG box 1) is located at residues 50-118 (PKKPVSSYLR…VYKEKISRFK (69 aa)). A phosphoserine; by PKA mark is found at serine 55, serine 56, and serine 61. A Phosphothreonine modification is found at threonine 122. A DNA-binding region (HMG box 2) is located at residues 155-219 (PKRPRSAYNV…RYHNEMKSWE (65 aa)). At serine 160 the chain carries Phosphoserine; by PKA. A phosphoserine mark is found at serine 193 and serine 195.

Monomer; binds DNA as a monomer. Homodimer. Component of the mitochondrial transcription initiation complex, composed at least of TFB2M, TFAM and POLRMT. In this complex TFAM recruits POLRMT to the promoter whereas TFB2M induces structural changes in POLRMT to enable promoter opening and trapping of the DNA non-template strand. Upon metabolic stress, forms a complex composed of FOXO3, SIRT3, TFAM and POLRMT. Interacts with TFB1M and TFB2M. Interacts with CLPX; this enhances DNA-binding. Phosphorylation by PKA within the HMG box 1 impairs DNA binding and promotes degradation by the AAA+ Lon protease.

It is found in the mitochondrion. The protein localises to the mitochondrion matrix. It localises to the mitochondrion nucleoid. Its function is as follows. Binds to the mitochondrial light strand promoter and functions in mitochondrial transcription regulation. Component of the mitochondrial transcription initiation complex, composed at least of TFB2M, TFAM and POLRMT that is required for basal transcription of mitochondrial DNA. In this complex, TFAM recruits POLRMT to a specific promoter whereas TFB2M induces structural changes in POLRMT to enable promoter opening and trapping of the DNA non-template strand. Required for accurate and efficient promoter recognition by the mitochondrial RNA polymerase. Promotes transcription initiation from the HSP1 and the light strand promoter by binding immediately upstream of transcriptional start sites. Is able to unwind DNA. Bends the mitochondrial light strand promoter DNA into a U-turn shape via its HMG boxes. Required for maintenance of normal levels of mitochondrial DNA. May play a role in organizing and compacting mitochondrial DNA. This Trachypithecus cristatus (Silvered leaf-monkey) protein is Transcription factor A, mitochondrial.